The chain runs to 379 residues: MSVRTLPLLFLNLGGEMLYVLDQRLRAQNIPGDKARKVLNDIISTMFNRKFTEELFKPQELYSKKALRTVYDRLAHASIMRLNQASMDKLYDLMTMAFKYQVLLCPRPKDVLLVTFNHLDSIKGFIQDSPTIIHQVDETFRQLTEIYGSLSAGEFQLIRQTLLIFFQDLHIRVSTFLKDKVQNSNGRFVLPVSGPVPWGIEVPGVIRVFNDKGDEVKRMEFRHGGDYVAAHKEGSFELYGDRVLKLGTNMYSASRPVETHMSATSKNSASRAQENIAPNPLAKEELNFLARLIGGMEIKKPSGPEPGFRLNLFTTDEEEEHAALSRPEELSYEVISIQATQDQQRSEELARIMEEFEMTEQPERNTSKGDDLLAMMDRL.

As to expression, predominantly expressed in testis.

The protein resides in the basal cell membrane. In terms of biological role, may be involved in drug clearance in the placenta. In Rattus norvegicus (Rat), this protein is Protein OSCP1 (Oscp1).